The chain runs to 106 residues: COX assembly mitochondrial protein homolog (106 aa).

An N-acetylalanine modification is found at Ala-2. One can recognise a CHCH domain in the interval 28-71 (RERCSEQVEDFTRCCKDSGILMVLKCRKENSALKDCLTAYYNDP). 2 short sequence motifs (cx9C motif) span residues 31–41 (CSEQVEDFTRC) and 53–63 (CRKENSALKDC). Cystine bridges form between Cys-31-Cys-63 and Cys-41-Cys-53.

It belongs to the CMC family. As to quaternary structure, component of the MITRAC (mitochondrial translation regulation assembly intermediate of cytochrome c oxidase complex) complex, the core components of this complex being COA3/MITRAC12 and COX14.

The protein resides in the mitochondrion. Functionally, component of the MITRAC (mitochondrial translation regulation assembly intermediate of cytochrome c oxidase complex) complex, that regulates cytochrome c oxidase assembly. The chain is COX assembly mitochondrial protein homolog (Cmc1) from Mus musculus (Mouse).